The primary structure comprises 436 residues: Arginine-hydroxylase NDUFAF5, mitochondrial (436 aa).

Residues methionine 1–tyrosine 25 constitute a mitochondrion transit peptide. Residues valine 365–lysine 436 form a disordered region. The segment covering glutamine 369 to glutamine 380 has biased composition (low complexity). 2 stretches are compositionally biased toward basic and acidic residues: residues proline 391 to lysine 411 and glutamine 421 to lysine 436.

Belongs to the methyltransferase superfamily.

It localises to the mitochondrion. Functionally, involved in the assembly of mitochondrial NADH:ubiquinone oxidoreductase complex (complex I, MT-ND1) at early stages. Probably acts as an arginine hydroxylase. May also have methyltransferase activity. The chain is Arginine-hydroxylase NDUFAF5, mitochondrial from Dictyostelium discoideum (Social amoeba).